The sequence spans 654 residues: Marinolic acid--CoA ligase (654 aa).

It belongs to the ATP-dependent AMP-binding enzyme family.

It catalyses the reaction ATP + a marinolic acid + CoA = AMP + diphosphate + a marinoloyl-CoA.. The enzyme catalyses ATP + a pseudomonic acid + CoA = AMP + diphosphate + a pseudomonoyl-CoA.. It carries out the reaction marinolate C + ATP + CoA = marinoloyl-CoA C + AMP + diphosphate. The catalysed reaction is pseudomonate C + ATP + CoA = pseudomonoyl-CoA C + AMP + diphosphate. It participates in antibiotic biosynthesis. Functionally, acyl-CoA ligase that catalyzes the CoA acylation of pseudomonate C, leading to the formation of pseudomonoyl-CoA C (PAC-CoA). Also shows high activity with pseudomonoyl-CoA A as substrate. In addition, can activate acetic, octanoic, 2,4-dodecadienoic and 2,4-decadienoic acids, although with much lower activity. In vivo, is probably involved in the biosynthesis of thiomarinol, a naturally occurring double-headed antibiotic. In Pseudoalteromonas sp. (strain SANK 73390), this protein is Marinolic acid--CoA ligase.